The sequence spans 321 residues: MDIIRKISHFAGQTFGIWVIVFAVLGFSFPSLFTWISSYITIFLGIIMFGMGLTLQADDFKELVRKPWQVIIGVIAQYTIMPLVAFGLAFGLHLPAEIAVGVILVGCCPGGTASNVMTFLAKGNTALSVAVTTISTLLAPVVTPLLIMLFAKEWLPVSPGSLFISILQAVLFPIIAGLIVKMFFRKQVAKAVHALPLVSVIGIVAIVSAVVSGNRENLLQSGLLIFSVVILHNGIGYLLGFLCAKLLKMDYPSQKAIAIEVGMQNSGLGAALATAHFSPLSAVPSAIFSVWHNLSGSMLATYWSKKVKKKQAGSKSSNLSL.

At 1-6 (MDIIRK) the chain is on the extracellular side. Residues 7-29 (ISHFAGQTFGIWVIVFAVLGFSF) traverse the membrane as a helical segment. Residues 30 to 34 (PSLFT) are Cytoplasmic-facing. Residues 35–57 (WISSYITIFLGIIMFGMGLTLQA) form a helical membrane-spanning segment. Residues 58 to 69 (DDFKELVRKPWQ) are Extracellular-facing. The chain crosses the membrane as a helical span at residues 70–92 (VIIGVIAQYTIMPLVAFGLAFGL). The Cytoplasmic portion of the chain corresponds to 93–97 (HLPAE). Residues 98–120 (IAVGVILVGCCPGGTASNVMTFL) traverse the membrane as a helical segment. At 121-129 (AKGNTALSV) the chain is on the extracellular side. Residues 130–150 (AVTTISTLLAPVVTPLLIMLF) traverse the membrane as a helical segment. Residues 151-159 (AKEWLPVSP) lie on the Cytoplasmic side of the membrane. Residues 160 to 180 (GSLFISILQAVLFPIIAGLIV) form a helical membrane-spanning segment. Residues 181–190 (KMFFRKQVAK) lie on the Extracellular side of the membrane. A helical transmembrane segment spans residues 191–211 (AVHALPLVSVIGIVAIVSAVV). Residues 212–221 (SGNRENLLQS) lie on the Cytoplasmic side of the membrane. A helical transmembrane segment spans residues 222–242 (GLLIFSVVILHNGIGYLLGFL). Over 243-267 (CAKLLKMDYPSQKAIAIEVGMQNSG) the chain is Extracellular. The chain crosses the membrane as a helical span at residues 268–288 (LGAALATAHFSPLSAVPSAIF). Residues 289-321 (SVWHNLSGSMLATYWSKKVKKKQAGSKSSNLSL) lie on the Cytoplasmic side of the membrane.

This sequence belongs to the bile acid:sodium symporter (BASS) (TC 2.A.28) family.

It localises to the cell membrane. This is an uncharacterized protein from Bacillus subtilis (strain 168).